The following is a 92-amino-acid chain: Phosphoribosyl-ATP pyrophosphatase (92 aa).

It belongs to the PRA-PH family.

The protein localises to the cytoplasm. The enzyme catalyses 1-(5-phospho-beta-D-ribosyl)-ATP + H2O = 1-(5-phospho-beta-D-ribosyl)-5'-AMP + diphosphate + H(+). It functions in the pathway amino-acid biosynthesis; L-histidine biosynthesis; L-histidine from 5-phospho-alpha-D-ribose 1-diphosphate: step 2/9. The protein is Phosphoribosyl-ATP pyrophosphatase of Leptospira borgpetersenii serovar Hardjo-bovis (strain JB197).